We begin with the raw amino-acid sequence, 263 residues long: 3-methyl-2-oxobutanoate hydroxymethyltransferase 2 (263 aa).

Residues Asp45 and Asp84 each coordinate Mg(2+). Residues 45–46 (DS), Asp84, and Lys112 each bind 3-methyl-2-oxobutanoate. Glu114 contacts Mg(2+). Glu181 serves as the catalytic Proton acceptor.

The protein belongs to the PanB family. In terms of assembly, homodecamer; pentamer of dimers. It depends on Mg(2+) as a cofactor.

The protein resides in the cytoplasm. The enzyme catalyses 3-methyl-2-oxobutanoate + (6R)-5,10-methylene-5,6,7,8-tetrahydrofolate + H2O = 2-dehydropantoate + (6S)-5,6,7,8-tetrahydrofolate. The protein operates within cofactor biosynthesis; (R)-pantothenate biosynthesis; (R)-pantoate from 3-methyl-2-oxobutanoate: step 1/2. Its function is as follows. Catalyzes the reversible reaction in which hydroxymethyl group from 5,10-methylenetetrahydrofolate is transferred onto alpha-ketoisovalerate to form ketopantoate. This chain is 3-methyl-2-oxobutanoate hydroxymethyltransferase 2, found in Aliivibrio fischeri (strain ATCC 700601 / ES114) (Vibrio fischeri).